A 146-amino-acid chain; its full sequence is Large ribosomal subunit protein uL15 (146 aa).

The segment covering 1-13 (MKLHELKPAEGSR) has biased composition (basic and acidic residues). The interval 1-51 (MKLHELKPAEGSRKVRNRVGRGTSSGNGKTSGRGQKGQKARSGGGVRLGFE) is disordered. Composition is skewed to gly residues over residues 23–35 (TSSGNGKTSGRGQ) and 42–51 (SGGGVRLGFE).

Belongs to the universal ribosomal protein uL15 family. As to quaternary structure, part of the 50S ribosomal subunit.

In terms of biological role, binds to the 23S rRNA. The sequence is that of Large ribosomal subunit protein uL15 from Streptococcus pneumoniae serotype 2 (strain D39 / NCTC 7466).